A 209-amino-acid chain; its full sequence is Ras-like protein (209 aa).

A GTP-binding site is contributed by Gly-10 to Ser-17. The Effector region motif lies at Tyr-55 to Arg-63. Thr-58 carries the post-translational modification Phosphothreonine. Residues Asp-79–Gln-83 and Asn-140–Asp-143 contribute to the GTP site. Cys-206 is modified (cysteine methyl ester). Residue Cys-206 is the site of S-geranylgeranyl cysteine attachment. Residues Leu-207–Ile-209 constitute a propeptide, removed in mature form.

This sequence belongs to the small GTPase superfamily. Ras family. In terms of processing, phosphorylated in the presence of insulin.

The protein resides in the cell membrane. It carries out the reaction GTP + H2O = GDP + phosphate + H(+). Alternates between an inactive form bound to GDP and an active form bound to GTP. Activated by a guanine nucleotide-exchange factor (GEF) and inactivated by a GTPase-activating protein (GAP). In terms of biological role, this protein is activated by the insulin/insulin (insulin-like)-receptor system. This transition enables the ras protein to interact with the lectin-receptor/lectin complex, a process which ultimately lead to an initiation of an intra-cellular signal-transduction chain. This is Ras-like protein from Geodia cydonium (Sponge).